We begin with the raw amino-acid sequence, 802 residues long: Leucine--tRNA ligase (802 aa).

The 'HIGH' region motif lies at 40-51; that stretch reads PYPSGAGLHVGH. Residues 576–580 carry the 'KMSKS' region motif; sequence KMSKS. Lys-579 is a binding site for ATP.

Belongs to the class-I aminoacyl-tRNA synthetase family.

It localises to the cytoplasm. It carries out the reaction tRNA(Leu) + L-leucine + ATP = L-leucyl-tRNA(Leu) + AMP + diphosphate. The sequence is that of Leucine--tRNA ligase from Bacillus cytotoxicus (strain DSM 22905 / CIP 110041 / 391-98 / NVH 391-98).